We begin with the raw amino-acid sequence, 188 residues long: Guanylate kinase (188 aa).

A Guanylate kinase-like domain is found at 8–188; that stretch reads GRIVVLAGPS…AVAAISEILR (181 aa). 15-22 provides a ligand contact to ATP; that stretch reads GPSAVGKS.

It belongs to the guanylate kinase family.

The protein resides in the cytoplasm. It catalyses the reaction GMP + ATP = GDP + ADP. In terms of biological role, essential for recycling GMP and indirectly, cGMP. This chain is Guanylate kinase, found in Corynebacterium jeikeium (strain K411).